Reading from the N-terminus, the 725-residue chain is Palmitoyltransferase AKR1 (725 aa).

At 1–303 (MGTIAMASIN…LKDKRSFVTR (303 aa)) the chain is on the cytoplasmic side. ANK repeat units follow at residues 84–113 (EGITPLHWAAINNQYAMCKFLIEHGAEINR), 118–147 (SIATPLQWAAQRCHYYTVNLLLQHGADPLV), 151–180 (QGYNTLHISTFNGNVLLLVLLLHQGIPVDV), 184–213 (FGHTALMWAAYKGFPQCVDLFLRWGASVHA), and 217–246 (QGFTALHWALVKGSPGCILKLIEYGADRFA). Residues 304–324 (FLFFWPFVLVWAMLVAMSSAP) form a helical membrane-spanning segment. Residues 325 to 326 (VY) lie on the Lumenal side of the membrane. A helical membrane pass occupies residues 327-347 (IGVPLGIAAVYAIQWVAQQVL). Over 348-364 (EYAPSDMRHFHKTPWLT) the chain is Cytoplasmic. The helical transmembrane segment at 365 to 385 (GIFAATLFWTGVNWLTTVLFA) threads the bilayer. The Lumenal segment spans residues 386 to 397 (TTLGAPEGKGHG). The helical transmembrane segment at 398-418 (ILNFLFALFFGFTVYFYIASM) threads the bilayer. At 419–495 (RYDPGFVPKM…NCVGINNHRH (77 aa)) the chain is on the cytoplasmic side. The 51-residue stretch at 451–501 (NFCVTCMIQTPLRSKHCRRCQRCVAKHDHHCPWVYNCVGINNHRHFFFYLI) folds into the DHHC domain. Catalysis depends on Cys-481, which acts as the S-palmitoyl cysteine intermediate. Residues 496 to 516 (FFFYLISLTMGIVSYDFLLYY) traverse the membrane as a helical segment. At 517-547 (YFDTVSKNASETCNVLSPTLCKYINADSYTS) the chain is on the lumenal side. Residues 548–568 (ILAIWITMQLLWVTMLLFTQF) traverse the membrane as a helical segment. The Cytoplasmic segment spans residues 569-725 (IQVARAMTTY…YEAVGTEDVV (157 aa)).

Belongs to the DHHC palmitoyltransferase family. AKR/ZDHHC17 subfamily.

The protein localises to the early endosome membrane. It is found in the golgi apparatus membrane. The enzyme catalyses L-cysteinyl-[protein] + hexadecanoyl-CoA = S-hexadecanoyl-L-cysteinyl-[protein] + CoA. Functionally, palmitoyltransferase specific for casein kinase 1. The chain is Palmitoyltransferase AKR1 (AKR1) from Gibberella zeae (strain ATCC MYA-4620 / CBS 123657 / FGSC 9075 / NRRL 31084 / PH-1) (Wheat head blight fungus).